Here is a 427-residue protein sequence, read N- to C-terminus: G2/mitotic-specific cyclin-B1 (427 aa).

Residues 33-126 (ATSKPGLRPR…DTPSPSPMET (94 aa)) are disordered. Lysine 73 carries the post-translational modification N6-acetyllysine. Positions 100 to 110 (EPEHVKEDKLS) are enriched in basic and acidic residues. At serine 120 the chain carries Phosphoserine; by CDK1. The residue at position 122 (serine 122) is a Phosphoserine. A Phosphoserine; by PLK1 modification is found at serine 127. Serine 141 carries the post-translational modification Phosphoserine. Interaction with CDK2 regions lie at residues 163–171 (EYVKDIYAY) and 252–255 (YEEM). Threonine 315 is modified (phosphothreonine).

This sequence belongs to the cyclin family. Cyclin AB subfamily. Interacts with the CDC2 protein kinase to form a serine/threonine kinase holoenzyme complex also known as maturation promoting factor (MPF). The cyclin subunit imparts substrate specificity to the complex. Binds HEI10. Interacts with catalytically active RALBP1 and CDC2 during mitosis to form an endocytotic complex during interphase. Interacts with CCNF; interaction is required for nuclear localization. Interacts with CDK5RAP3. Interacts with RFPL4A and UBE2A. Interacts with INCA1. In terms of processing, ubiquitinated by the SCF(NIPA) complex during interphase, leading to its destruction. Deubiquitinated by USP22 during G2/M phase. Phosphorylated by PLK1 at Ser-127 on centrosomes during prophase: phosphorylation by PLK1 does not cause nuclear import. Phosphorylation at Ser-141 was also reported to be mediated by PLK1 but Ser-127 seems to be the primary phosphorylation site.

It localises to the cytoplasm. It is found in the nucleus. The protein resides in the cytoskeleton. Its subcellular location is the microtubule organizing center. The protein localises to the centrosome. In terms of biological role, essential for the control of the cell cycle at the G2/M (mitosis) transition. The polypeptide is G2/mitotic-specific cyclin-B1 (CCNB1) (Bos taurus (Bovine)).